Consider the following 135-residue polypeptide: Large ribosomal subunit protein uL16c (135 aa).

Residues 1–17 show a composition bias toward basic residues; the sequence is MLSPKRTRFRKQHRGRM. The segment at 1–20 is disordered; the sequence is MLSPKRTRFRKQHRGRMKGT.

Belongs to the universal ribosomal protein uL16 family. Part of the 50S ribosomal subunit.

It localises to the plastid. The protein resides in the chloroplast. The protein is Large ribosomal subunit protein uL16c of Lemna minor (Common duckweed).